We begin with the raw amino-acid sequence, 148 residues long: Isotocin-neurophysin IT 2 (148 aa).

The signal sequence occupies residues 1–20 (MSGSMSSVFSLLYLLSVCSA). A disulfide bond links cysteine 21 and cysteine 26. Glycine 29 carries the glycine amide modification. 7 disulfides stabilise this stretch: cysteine 42–cysteine 86, cysteine 45–cysteine 59, cysteine 53–cysteine 76, cysteine 60–cysteine 66, cysteine 93–cysteine 105, cysteine 99–cysteine 117, and cysteine 106–cysteine 111.

It belongs to the vasopressin/oxytocin family.

In terms of biological role, isotocin causes contraction of smooth muscles. This chain is Isotocin-neurophysin IT 2, found in Catostomus commersonii (White sucker).